The chain runs to 148 residues: NADPH-dependent 7-cyano-7-deazaguanine reductase (148 aa).

Residue C50 is the Thioimide intermediate of the active site. D57 serves as the catalytic Proton donor. Substrate-binding positions include 72 to 74 and 91 to 92; these read VES and HE.

Belongs to the GTP cyclohydrolase I family. QueF type 1 subfamily.

It localises to the cytoplasm. It carries out the reaction 7-aminomethyl-7-carbaguanine + 2 NADP(+) = 7-cyano-7-deazaguanine + 2 NADPH + 3 H(+). The protein operates within tRNA modification; tRNA-queuosine biosynthesis. Catalyzes the NADPH-dependent reduction of 7-cyano-7-deazaguanine (preQ0) to 7-aminomethyl-7-deazaguanine (preQ1). In Helicobacter pylori (strain HPAG1), this protein is NADPH-dependent 7-cyano-7-deazaguanine reductase.